A 267-amino-acid polypeptide reads, in one-letter code: Expansin-B10 (267 aa).

Positions M1–C22 are cleaved as a signal peptide. A glycan (N-linked (GlcNAc...) asparagine) is linked at N32. In terms of domain architecture, Expansin-like EG45 spans G61 to E167. 3 cysteine pairs are disulfide-bonded: C64–C92, C95–C162, and C100–C106. Positions N181–S262 constitute an Expansin-like CBD domain. N-linked (GlcNAc...) asparagine glycosylation is present at N213.

The protein belongs to the expansin family. Expansin B subfamily.

Its subcellular location is the secreted. It localises to the cell wall. The protein resides in the membrane. In terms of biological role, may cause loosening and extension of plant cell walls by disrupting non-covalent bonding between cellulose microfibrils and matrix glucans. No enzymatic activity has been found. May be required for rapid internodal elongation in deepwater rice during submergence. The polypeptide is Expansin-B10 (EXPB10) (Oryza sativa subsp. japonica (Rice)).